Reading from the N-terminus, the 127-residue chain is Large ribosomal subunit protein bL17 (127 aa).

The protein belongs to the bacterial ribosomal protein bL17 family. As to quaternary structure, part of the 50S ribosomal subunit. Contacts protein L32.

The protein is Large ribosomal subunit protein bL17 of Haemophilus ducreyi (strain 35000HP / ATCC 700724).